The chain runs to 159 residues: MFTQIALILSLIILIFFIYKFAMFKPHVVLTPLEYFNSRKRKILEYLDNYKVKLNVSIPPLTCTDLDKNYDIEEFEVMKQTNPEKFKKYISCGYVHNVYLLTAFEEWINNSLTHSDVSFENFQYLCIRPPADISTVDFKNFKSYIKSCIQTNKTNVTYY.

The chain crosses the membrane as a helical span at residues 4–24 (QIALILSLIILIFFIYKFAMF).

The protein localises to the membrane. This is an uncharacterized protein from Acheta domesticus (House cricket).